We begin with the raw amino-acid sequence, 367 residues long: Outer membrane protein P2 (367 aa).

Positions Met1 to Ala20 are cleaved as a signal peptide.

This sequence belongs to the Gram-negative porin family. In terms of assembly, homotrimer.

The protein resides in the cell outer membrane. In terms of biological role, forms pores that allow passive diffusion of small molecules across the outer membrane. This Haemophilus influenzae protein is Outer membrane protein P2 (ompP2).